The primary structure comprises 153 residues: MKPQKSLRARAMDILSRQEVSRIGLKRKLAPHAESEEELENVLNEFAERNWQSDLRYAEAYIRSKSRKHGSLRLKQALAQQGIDEKTSRNLLPDRSSEKQAAIAVLRKKFKHPAANLKEKQKQARFLAYRGFDADTVQTALKHAWDENWEDSC.

It belongs to the RecX family.

It is found in the cytoplasm. Functionally, modulates RecA activity. The chain is Regulatory protein RecX from Neisseria gonorrhoeae (strain ATCC 700825 / FA 1090).